The sequence spans 368 residues: Protein RecA (368 aa).

80 to 87 (GPESSGKT) contacts ATP. The segment covering 344 to 353 (NPTFTATPDS) has biased composition (polar residues). Positions 344-368 (NPTFTATPDSENADNADDEFSEEEL) are disordered. Residues 354 to 368 (ENADNADDEFSEEEL) are compositionally biased toward acidic residues.

The protein belongs to the RecA family.

The protein localises to the cytoplasm. Can catalyze the hydrolysis of ATP in the presence of single-stranded DNA, the ATP-dependent uptake of single-stranded DNA by duplex DNA, and the ATP-dependent hybridization of homologous single-stranded DNAs. It interacts with LexA causing its activation and leading to its autocatalytic cleavage. In Mannheimia haemolytica (Pasteurella haemolytica), this protein is Protein RecA.